The chain runs to 202 residues: T-cell surface glycoprotein CD3 epsilon chain (202 aa).

A signal peptide spans 1–21 (MPSGSLWRVLGLCLLSVGAWG). The Extracellular segment spans residues 22-125 (QEDNEDPLEP…NCVEVDTMTA (104 aa)). The Ig-like domain maps to 33–107 (PQTSASARYK…TSNSLEKNYL (75 aa)). A disulfide bond links Cys-54 and Cys-96. A helical transmembrane segment spans residues 126 to 146 (VAIVVADVCITLGFLLLVYYW). Residues 147-202 (SKNKKASSVTMMRGPGAGGRPRGQNKEKPPPVPNPDYEPIRKGQQDLYSGLNQRGI) lie on the Cytoplasmic side of the membrane. The disordered stretch occupies residues 156-202 (TMMRGPGAGGRPRGQNKEKPPPVPNPDYEPIRKGQQDLYSGLNQRGI). Residues 170 to 187 (QNKEKPPPVPNPDYEPIR) form an NUMB-binding region region. Positions 173 to 200 (EKPPPVPNPDYEPIRKGQQDLYSGLNQR) constitute an ITAM domain. The tract at residues 174–181 (KPPPVPNP) is proline-rich sequence. Residues Tyr-183 and Tyr-194 each carry the phosphotyrosine modification. Positions 192 to 202 (DLYSGLNQRGI) are enriched in polar residues.

As to quaternary structure, the TCR-CD3 complex is composed of a CD3D/CD3E and a CD3G/CD3E heterodimers that preferentially associate with TCRalpha and TCRbeta, respectively, to form TCRalpha/CD3E/CD3G and TCRbeta/CD3G/CD3E trimers. In turn, the hexamer interacts with CD3Z homodimer to form the TCR-CD3 complex. Alternatively, TCRalpha and TCRbeta can be replaced by TCRgamma and TCRdelta. Interacts with CD6. Interacts (via Proline-rich sequence) with NCK1; the interaction is ligand dependent but independent of tyrosine kinase activation. Phosphorylated on Tyr residues after T-cell receptor triggering by LCK in association with CD4/CD8.

The protein resides in the cell membrane. Part of the TCR-CD3 complex present on T-lymphocyte cell surface that plays an essential role in adaptive immune response. When antigen presenting cells (APCs) activate T-cell receptor (TCR), TCR-mediated signals are transmitted across the cell membrane by the CD3 chains CD3D, CD3E, CD3G and CD3Z. All CD3 chains contain immunoreceptor tyrosine-based activation motifs (ITAMs) in their cytoplasmic domain. Upon TCR engagement, these motifs become phosphorylated by Src family protein tyrosine kinases LCK and FYN, resulting in the activation of downstream signaling pathways. In addition of this role of signal transduction in T-cell activation, CD3E plays an essential role in correct T-cell development. Also participates in internalization and cell surface down-regulation of TCR-CD3 complexes via endocytosis sequences present in CD3E cytosolic region. In addition to its role as a TCR coreceptor, it serves as a receptor for ITPRIPL1. Ligand recognition inhibits T-cell activation by promoting interaction with NCK1, which prevents CD3E-ZAP70 interaction and blocks the ERK-NFkB signaling cascade and calcium influx. In Felis catus (Cat), this protein is T-cell surface glycoprotein CD3 epsilon chain (CD3E).